The sequence spans 990 residues: Putative ariadne-like RING finger protein R811 (990 aa).

In terms of domain architecture, VWFA spans 8-201 (DLAIVVDATG…IITQTTIKLL (194 aa)). The tract at residues 797 to 990 (EKGLCMICFN…GGAFEYDQDD (194 aa)) is TRIAD supradomain. Zn(2+) contacts are provided by C801, C804, C827, and C830. Residues 801 to 854 (CMICFNEFSKSNLRQICGRKVCQSVACYDCMKSWYGENKVGDLIHVNALTCPFC) form an RING-type 1 zinc finger. The IBR-type zinc finger occupies 855-903 (KQCPMFNILAAFNRQVCAMVRTNNSFDIDWWYGWCLKCFQPKKVVEKEC). C930 and C935 together coordinate Zn(2+). Residues 930–961 (CPNSLCKIPIIKDGGCNHMECTACKKHFCWLC) form an RING-type 2; atypical zinc finger. C945 is a catalytic residue. Residues C950 and C953 each coordinate Zn(2+).

The protein is Putative ariadne-like RING finger protein R811 of Acanthamoeba polyphaga (Amoeba).